Reading from the N-terminus, the 504-residue chain is D-alanine--D-alanyl carrier protein ligase (504 aa).

ATP is bound at residue 152-153; that stretch reads TS. Residue aspartate 197 coordinates D-alanine. 292 to 297 serves as a coordination point for ATP; the sequence is NTYGPT. A D-alanine-binding site is contributed by valine 301. ATP contacts are provided by residues aspartate 383, 394 to 397, and lysine 492; that span reads YNGR. Position 492 (lysine 492) interacts with D-alanine.

This sequence belongs to the ATP-dependent AMP-binding enzyme family. DltA subfamily.

It localises to the cytoplasm. It catalyses the reaction holo-[D-alanyl-carrier protein] + D-alanine + ATP = D-alanyl-[D-alanyl-carrier protein] + AMP + diphosphate. The protein operates within cell wall biogenesis; lipoteichoic acid biosynthesis. Functionally, catalyzes the first step in the D-alanylation of lipoteichoic acid (LTA), the activation of D-alanine and its transfer onto the D-alanyl carrier protein (Dcp) DltC. In an ATP-dependent two-step reaction, forms a high energy D-alanyl-AMP intermediate, followed by transfer of the D-alanyl residue as a thiol ester to the phosphopantheinyl prosthetic group of the Dcp. D-alanylation of LTA plays an important role in modulating the properties of the cell wall in Gram-positive bacteria, influencing the net charge of the cell wall. The sequence is that of D-alanine--D-alanyl carrier protein ligase from Bacillus cereus (strain Q1).